Reading from the N-terminus, the 188-residue chain is Elongation factor P (188 aa).

The protein belongs to the elongation factor P family.

Its subcellular location is the cytoplasm. It participates in protein biosynthesis; polypeptide chain elongation. Its function is as follows. Involved in peptide bond synthesis. Stimulates efficient translation and peptide-bond synthesis on native or reconstituted 70S ribosomes in vitro. Probably functions indirectly by altering the affinity of the ribosome for aminoacyl-tRNA, thus increasing their reactivity as acceptors for peptidyl transferase. The sequence is that of Elongation factor P from Rickettsia peacockii (strain Rustic).